Consider the following 179-residue polypeptide: Large ribosomal subunit protein uL6 (179 aa).

This sequence belongs to the universal ribosomal protein uL6 family. In terms of assembly, part of the 50S ribosomal subunit.

Its function is as follows. This protein binds to the 23S rRNA, and is important in its secondary structure. It is located near the subunit interface in the base of the L7/L12 stalk, and near the tRNA binding site of the peptidyltransferase center. In Halothermothrix orenii (strain H 168 / OCM 544 / DSM 9562), this protein is Large ribosomal subunit protein uL6.